Reading from the N-terminus, the 225-residue chain is Pyridoxine/pyridoxamine 5'-phosphate oxidase (225 aa).

Substrate is bound by residues 21 to 24 (RKSY) and K79. FMN is bound by residues 74–79 (RVVLIK), 89–90 (YT), R95, and K96. Residues Y136, R140, and S144 each coordinate substrate. Residues 153–154 (QS) and W197 each bind FMN. 203–205 (RLH) is a substrate binding site. R207 contacts FMN.

Belongs to the pyridoxamine 5'-phosphate oxidase family. As to quaternary structure, homodimer. It depends on FMN as a cofactor.

The enzyme catalyses pyridoxamine 5'-phosphate + O2 + H2O = pyridoxal 5'-phosphate + H2O2 + NH4(+). It catalyses the reaction pyridoxine 5'-phosphate + O2 = pyridoxal 5'-phosphate + H2O2. It functions in the pathway cofactor metabolism; pyridoxal 5'-phosphate salvage; pyridoxal 5'-phosphate from pyridoxamine 5'-phosphate: step 1/1. Its pathway is cofactor metabolism; pyridoxal 5'-phosphate salvage; pyridoxal 5'-phosphate from pyridoxine 5'-phosphate: step 1/1. In terms of biological role, catalyzes the oxidation of either pyridoxine 5'-phosphate (PNP) or pyridoxamine 5'-phosphate (PMP) into pyridoxal 5'-phosphate (PLP). The protein is Pyridoxine/pyridoxamine 5'-phosphate oxidase of Paracidovorax citrulli (strain AAC00-1) (Acidovorax citrulli).